The chain runs to 606 residues: MSALTTSQLATSATGFGIADRSAPSSLLRHGFQGLKPRSPAGGDASSLSVTTSARATPKQQRSVQRGSRRFPSVVVYATGAGMNVVFVGAEMAPWSKTGGLGDVLGGLPPAMAANGHRVMVISPRYDQYKDAWDTSVVAEIKVADRYERVRFFHCYKRGVDRVFIDHPSFLEKVWGKTGEKIYGPDTGVDYKDNQMRFSLLCQEAPRILNLNNNPYFKGTYGEDVVFVCNDWHTGPLPSYLKNNYQPNGIYRNAKVAFCIHNISYQGRFAFEDYPELNLSERFKSSFDFIDGYDTPVEGRKINWMKAGILESDRVLTVSPYYAEELISGIARGCELDNIMRLTGITGIVNGMDVSEWDPSKDKYITTKYDATTAIEAKALNKEALQAEAGLPVDRKVPLIAFIGRLEEQKGPDVMAAAIPELMQENVQIVLLGTGKKKFEKLLKSMEEKYPGKVRAVVKFNAPLAHLIMAGADVLAVPSRFEPCGLIQLQGMRYGTPCACASTGGLVDTVIEGKTGFHMGRLSVDCKVVEPSDVQKVATTLKRAIKIVGTPAYNEMVRNCMNQDLSWKGPAKNWENVLLGLGVAGSEPGVEGEEIAPLAKENVAAP.

The transit peptide at 1-76 directs the protein to the chloroplast; the sequence is MSALTTSQLA…GSRRFPSVVV (76 aa). The interval 29–67 is disordered; sequence RHGFQGLKPRSPAGGDASSLSVTTSARATPKQQRSVQRG. Over residues 46–66 the composition is skewed to polar residues; that stretch reads SSLSVTTSARATPKQQRSVQR. Lys-97 contributes to the ADP-alpha-D-glucose binding site.

It belongs to the glycosyltransferase 1 family. Bacterial/plant glycogen synthase subfamily.

It localises to the plastid. Its subcellular location is the chloroplast. The protein localises to the amyloplast. The enzyme catalyses an NDP-alpha-D-glucose + [(1-&gt;4)-alpha-D-glucosyl](n) = [(1-&gt;4)-alpha-D-glucosyl](n+1) + a ribonucleoside 5'-diphosphate + H(+). The protein operates within glycan biosynthesis; starch biosynthesis. Required for the synthesis of amylose in endosperm. This Oryza sativa (Rice) protein is Granule-bound starch synthase 1, chloroplastic/amyloplastic (WAXY).